We begin with the raw amino-acid sequence, 215 residues long: Nucleoside triphosphate pyrophosphatase (215 aa).

Belongs to the Maf family. It depends on a divalent metal cation as a cofactor.

It is found in the cytoplasm. It catalyses the reaction a ribonucleoside 5'-triphosphate + H2O = a ribonucleoside 5'-phosphate + diphosphate + H(+). The catalysed reaction is a 2'-deoxyribonucleoside 5'-triphosphate + H2O = a 2'-deoxyribonucleoside 5'-phosphate + diphosphate + H(+). In terms of biological role, nucleoside triphosphate pyrophosphatase. May have a dual role in cell division arrest and in preventing the incorporation of modified nucleotides into cellular nucleic acids. This chain is Nucleoside triphosphate pyrophosphatase, found in Rickettsia conorii (strain ATCC VR-613 / Malish 7).